The following is a 360-amino-acid chain: tRNA (guanine(37)-N(1))-methyltransferase (360 aa).

S-adenosyl-L-methionine is bound by residues arginine 197, 235–236 (DL), and asparagine 283.

It belongs to the class I-like SAM-binding methyltransferase superfamily. TRM5/TYW2 family. As to quaternary structure, monomer.

The protein resides in the mitochondrion matrix. It is found in the nucleus. Its subcellular location is the cytoplasm. The catalysed reaction is guanosine(37) in tRNA + S-adenosyl-L-methionine = N(1)-methylguanosine(37) in tRNA + S-adenosyl-L-homocysteine + H(+). In terms of biological role, specifically methylates the N1 position of guanosine-37 in various cytoplasmic and mitochondrial tRNAs. Methylation is not dependent on the nature of the nucleoside 5' of the target nucleoside. This is the first step in the biosynthesis of wybutosine (yW), a modified base adjacent to the anticodon of tRNAs and required for accurate decoding. This is tRNA (guanine(37)-N(1))-methyltransferase from Encephalitozoon cuniculi (strain GB-M1) (Microsporidian parasite).